The chain runs to 186 residues: ATP synthase subunit delta (186 aa).

It belongs to the ATPase delta chain family. As to quaternary structure, F-type ATPases have 2 components, F(1) - the catalytic core - and F(0) - the membrane proton channel. F(1) has five subunits: alpha(3), beta(3), gamma(1), delta(1), epsilon(1). F(0) has three main subunits: a(1), b(2) and c(10-14). The alpha and beta chains form an alternating ring which encloses part of the gamma chain. F(1) is attached to F(0) by a central stalk formed by the gamma and epsilon chains, while a peripheral stalk is formed by the delta and b chains.

Its subcellular location is the cell membrane. Functionally, f(1)F(0) ATP synthase produces ATP from ADP in the presence of a proton or sodium gradient. F-type ATPases consist of two structural domains, F(1) containing the extramembraneous catalytic core and F(0) containing the membrane proton channel, linked together by a central stalk and a peripheral stalk. During catalysis, ATP synthesis in the catalytic domain of F(1) is coupled via a rotary mechanism of the central stalk subunits to proton translocation. Its function is as follows. This protein is part of the stalk that links CF(0) to CF(1). It either transmits conformational changes from CF(0) to CF(1) or is implicated in proton conduction. The chain is ATP synthase subunit delta from Wolbachia pipientis wMel.